The sequence spans 888 residues: Alanine--tRNA ligase (888 aa).

Zn(2+)-binding residues include H564, H568, C676, and H680.

This sequence belongs to the class-II aminoacyl-tRNA synthetase family. Requires Zn(2+) as cofactor.

The protein resides in the cytoplasm. The enzyme catalyses tRNA(Ala) + L-alanine + ATP = L-alanyl-tRNA(Ala) + AMP + diphosphate. Catalyzes the attachment of alanine to tRNA(Ala) in a two-step reaction: alanine is first activated by ATP to form Ala-AMP and then transferred to the acceptor end of tRNA(Ala). Also edits incorrectly charged Ser-tRNA(Ala) and Gly-tRNA(Ala) via its editing domain. In Bartonella quintana (strain Toulouse) (Rochalimaea quintana), this protein is Alanine--tRNA ligase.